The following is a 456-amino-acid chain: Arginine biosynthesis bifunctional protein ArgJ, mitochondrial (456 aa).

Positions 184, 213, 224, 311, 451, and 456 each coordinate substrate. Thr224 (nucleophile) is an active-site residue.

This sequence belongs to the ArgJ family. In terms of assembly, heterodimer of an alpha and a beta chain. Post-translationally, the alpha and beta chains are autoproteolytically processed from a single precursor protein within the mitochondrion.

The protein localises to the mitochondrion matrix. The enzyme catalyses N(2)-acetyl-L-ornithine + L-glutamate = N-acetyl-L-glutamate + L-ornithine. The catalysed reaction is L-glutamate + acetyl-CoA = N-acetyl-L-glutamate + CoA + H(+). It functions in the pathway amino-acid biosynthesis; L-arginine biosynthesis; L-ornithine and N-acetyl-L-glutamate from L-glutamate and N(2)-acetyl-L-ornithine (cyclic): step 1/1. It participates in amino-acid biosynthesis; L-arginine biosynthesis; N(2)-acetyl-L-ornithine from L-glutamate: step 1/4. Its function is as follows. Catalyzes two activities which are involved in the cyclic version of arginine biosynthesis: the synthesis of acetylglutamate from glutamate and acetyl-CoA, and of ornithine by transacetylation between acetylornithine and glutamate. In Aspergillus oryzae (strain ATCC 42149 / RIB 40) (Yellow koji mold), this protein is Arginine biosynthesis bifunctional protein ArgJ, mitochondrial.